The primary structure comprises 350 residues: Histidinol-phosphate aminotransferase 1 (350 aa).

At K210 the chain carries N6-(pyridoxal phosphate)lysine.

Belongs to the class-II pyridoxal-phosphate-dependent aminotransferase family. Histidinol-phosphate aminotransferase subfamily. In terms of assembly, homodimer. The cofactor is pyridoxal 5'-phosphate.

It catalyses the reaction L-histidinol phosphate + 2-oxoglutarate = 3-(imidazol-4-yl)-2-oxopropyl phosphate + L-glutamate. It participates in amino-acid biosynthesis; L-histidine biosynthesis; L-histidine from 5-phospho-alpha-D-ribose 1-diphosphate: step 7/9. This chain is Histidinol-phosphate aminotransferase 1, found in Pseudomonas fluorescens (strain Pf0-1).